The following is a 406-amino-acid chain: Enoyl-[acyl-carrier-protein] reductase [NADH] (406 aa).

NAD(+) contacts are provided by residues 48 to 53 (GASTGF), 74 to 75 (FE), 111 to 112 (DA), and 140 to 141 (IA). Residue tyrosine 226 coordinates substrate. Tyrosine 236 serves as the catalytic Proton donor. NAD(+) is bound by residues lysine 245 and 275–277 (LVT).

Belongs to the TER reductase family. In terms of assembly, monomer.

The catalysed reaction is a 2,3-saturated acyl-[ACP] + NAD(+) = a (2E)-enoyl-[ACP] + NADH + H(+). It functions in the pathway lipid metabolism; fatty acid biosynthesis. Functionally, involved in the final reduction of the elongation cycle of fatty acid synthesis (FAS II). Catalyzes the reduction of a carbon-carbon double bond in an enoyl moiety that is covalently linked to an acyl carrier protein (ACP). This chain is Enoyl-[acyl-carrier-protein] reductase [NADH], found in Coxiella burnetii (strain Dugway 5J108-111).